A 1368-amino-acid chain; its full sequence is Protein suppressor 2 of zeste (1368 aa).

The RING-type zinc-finger motif lies at 35–74 (CRLCRGYMIDPTTVDYCYHTYCRSCILKHLLRAVYCPECK). Disordered regions lie at residues 245 to 321 (SRIN…FKSL), 448 to 628 (QPLQ…QQQQ), 640 to 718 (TLPT…AVPQ), 861 to 903 (AGGK…KRSC), 935 to 1001 (ALSG…NGTA), 1057 to 1103 (SANP…STSN), 1116 to 1141 (ISANSNGGPSTTSGSNSNGTTNGDDL), 1161 to 1193 (AASSGNGSGSTSSSSAKPKNANALVRPQNASVR), 1211 to 1271 (STAA…KKPT), and 1298 to 1322 (VLSSNAAKSPELAKTTTAVALRPEP). The segment covering 449 to 461 (PLQQSASNPDSKY) has biased composition (polar residues). Positions 462–495 (SPNASPMSSCSSSTNGSSSSLGTADASTSTSTSS) are enriched in low complexity. A compositionally biased stretch (basic residues) spans 496-506 (SHRKRKKKHSK). Composition is skewed to low complexity over residues 599–628 (AEPEQQQQQQQQQQQPQQQQQQQQQQQQQQ) and 672–689 (PKQQQQQMPQQPQAVLQQ). 2 stretches are compositionally biased toward polar residues: residues 936 to 953 (LSGQRNNKGNSSNSNAYR) and 962 to 977 (LRNTAAPQHSFPSKSS). 4 stretches are compositionally biased toward low complexity: residues 1078–1099 (NNNNNNNNNNNNNNNNNNNNNN), 1119–1138 (NSNGGPSTTSGSNSNGTTNG), 1161–1183 (AASSGNGSGSTSSSSAKPKNANA), and 1231–1263 (STSNPGSLSPTNTSSSSSSSSSGSSGCSAATSP).

The protein resides in the nucleus. Functionally, regulates expression of the homeotic selector genes by influencing higher-order chromatin structure through interaction with other proteins. The sequence is that of Protein suppressor 2 of zeste (Su(z)2) from Drosophila melanogaster (Fruit fly).